We begin with the raw amino-acid sequence, 266 residues long: Glucosamine-6-phosphate deaminase (266 aa).

Aspartate 72 serves as the catalytic Proton acceptor; for enolization step. The For ring-opening step role is filled by aspartate 141. The active-site Proton acceptor; for ring-opening step is the histidine 143. Catalysis depends on glutamate 148, which acts as the For ring-opening step.

It belongs to the glucosamine/galactosamine-6-phosphate isomerase family. NagB subfamily. Homohexamer.

The enzyme catalyses alpha-D-glucosamine 6-phosphate + H2O = beta-D-fructose 6-phosphate + NH4(+). It functions in the pathway amino-sugar metabolism; N-acetylneuraminate degradation; D-fructose 6-phosphate from N-acetylneuraminate: step 5/5. Allosterically activated by N-acetylglucosamine 6-phosphate (GlcNAc6P). Functionally, catalyzes the reversible isomerization-deamination of glucosamine 6-phosphate (GlcN6P) to form fructose 6-phosphate (Fru6P) and ammonium ion. This chain is Glucosamine-6-phosphate deaminase, found in Tolumonas auensis (strain DSM 9187 / NBRC 110442 / TA 4).